The sequence spans 329 residues: Transcription factor TGA2.3 (329 aa).

A disordered region spans residues 1-48 (MADMSPRTDTSTDDTDDNHMLEPGQLALAAASDSDRSKDKHEDQKTLR). Basic and acidic residues predominate over residues 33 to 46 (DSDRSKDKHEDQKT). In terms of domain architecture, bZIP spans 43-87 (DQKTLRRLAQNREAARKSRLRKKAYVQQLENSRLKLTQLEQELQR). The segment at 45–65 (KTLRRLAQNREAARKSRLRKK) is basic motif. The interval 71-85 (LENSRLKLTQLEQEL) is leucine-zipper. The DOG1 domain maps to 110-326 (ALAFDMEYAR…RALSSLWLAR (217 aa)).

The protein belongs to the bZIP family. Interacts with NPR1/NH1 and NPR3/NH3.

It is found in the nucleus. Transcriptional regulator involved in defense response. In Oryza sativa subsp. japonica (Rice), this protein is Transcription factor TGA2.3.